We begin with the raw amino-acid sequence, 262 residues long: Ornithine carbamoyltransferase (262 aa).

Carbamoyl phosphate contacts are provided by residues 3–7, glutamine 30, arginine 54, and 81–84; these read STRTR and HPTQ. L-ornithine is bound by residues asparagine 114, aspartate 178, and 182–183; that span reads SM. Carbamoyl phosphate is bound by residues 219 to 222 and threonine 247; that span reads HCLP.

The protein belongs to the aspartate/ornithine carbamoyltransferase superfamily. OTCase family.

The protein localises to the cytoplasm. It catalyses the reaction carbamoyl phosphate + L-ornithine = L-citrulline + phosphate + H(+). Its pathway is amino-acid biosynthesis; L-arginine biosynthesis; L-arginine from L-ornithine and carbamoyl phosphate: step 1/3. This chain is Ornithine carbamoyltransferase (argF), found in Neisseria cinerea.